The following is a 1602-amino-acid chain: Calmodulin-regulated spectrin-associated protein 1 (1602 aa).

The Calponin-homology (CH) domain maps to Glu-216–Glu-331. 5 positions are modified to phosphoserine: Ser-217, Ser-371, Ser-375, Ser-416, and Ser-431. The segment at Gln-426 to Gln-471 is disordered. Thr-512 bears the Phosphothreonine mark. Ser-563, Ser-575, and Ser-589 each carry phosphoserine. The span at Ala-603–Pro-620 shows a compositional bias: basic and acidic residues. The tract at residues Ala-603 to Arg-637 is disordered. Phosphoserine is present on residues Ser-629, Ser-722, Ser-728, Ser-738, and Ser-740. The span at Lys-772 to Ser-789 shows a compositional bias: basic and acidic residues. Disordered stretches follow at residues Lys-772–Ala-808 and Leu-825–Pro-870. Composition is skewed to low complexity over residues Ser-797–Ala-808 and Thr-830–Thr-841. Over residues Gln-857 to Asp-869 the composition is skewed to basic and acidic residues. Positions Ala-871–Ile-892 are sufficient for interaction with SPTBN1. Coiled-coil stretches lie at residues Leu-873–Lys-909 and Asp-1016–Leu-1048. The interval Ser-903–Gly-922 is sufficient for interaction with calmodulin. Disordered stretches follow at residues Phe-1075–Leu-1165, Lys-1206–Pro-1226, and Ala-1301–Thr-1448. The residue at position 1080 (Ser-1080) is a Phosphoserine. The segment covering Arg-1103–Pro-1114 has biased composition (basic and acidic residues). Over residues Gln-1115–Val-1127 the composition is skewed to polar residues. Residues Lys-1206 to Ser-1220 show a composition bias toward low complexity. Residues Leu-1291 to Glu-1343 are a coiled coil. Positions Ala-1301–Arg-1346 are enriched in basic and acidic residues. Positions Pro-1361–Ser-1372 are enriched in basic residues. Residues Ser-1380–Asn-1392 are compositionally biased toward polar residues. The span at Leu-1393–Thr-1410 shows a compositional bias: low complexity. 2 positions are modified to phosphoserine: Ser-1398 and Ser-1427. The CKK domain maps to Gly-1463 to Lys-1597. Tyr-1537 is subject to Phosphotyrosine.

The protein belongs to the CAMSAP1 family. Interacts with spectrin via SPTBN1; the interaction is direct. Interacts with calmodulin; calcium-dependent it prevents interaction with spectrin.

It localises to the cytoplasm. The protein localises to the cytoskeleton. Its function is as follows. Key microtubule-organizing protein that specifically binds the minus-end of non-centrosomal microtubules and regulates their dynamics and organization. Specifically recognizes growing microtubule minus-ends and stabilizes microtubules. Acts on free microtubule minus-ends that are not capped by microtubule-nucleating proteins or other factors and protects microtubule minus-ends from depolymerization. In contrast to CAMSAP2 and CAMSAP3, tracks along the growing tips of minus-end microtubules without significantly affecting the polymerization rate: binds at the very tip of the microtubules minus-end and acts as a minus-end tracking protein (-TIP) that dissociates from microtubules after allowing tubulin incorporation. Through interaction with spectrin may regulate neurite outgrowth. The protein is Calmodulin-regulated spectrin-associated protein 1 (CAMSAP1) of Homo sapiens (Human).